Here is a 224-residue protein sequence, read N- to C-terminus: MLIEIPNVFSKEEVNQLREELDARTWIDGNQTSGVMASTRKRNQQLDKDDPVVLRIGELIMARLLAHPLFVSAALPLQFYPPLFNRYQGGETFGYHIDNAIRSTSDGMVRTDLSATLFLSEPDTYQGGELVIQDTYGQQSIKLAAGSLVLYPSTSLHQVTPVTSGERTAAFMWLQSMVRDEGQRRLLFQLDQSIQALTAQAAPERELFNLTGVYHNLLRRWSEL.

The Fe2OG dioxygenase domain maps to 78 to 176 (QFYPPLFNRY…RTAAFMWLQS (99 aa)). Fe cation contacts are provided by His96, Asp98, and His157. Arg167 provides a ligand contact to 2-oxoglutarate.

Fe(2+) is required as a cofactor. It depends on L-ascorbate as a cofactor.

In Shewanella sp. (strain MR-7), this protein is PKHD-type hydroxylase Shewmr7_0698.